The following is a 580-amino-acid chain: High affinity choline transporter 1 (580 aa).

Topologically, residues 1–6 are extracellular; that stretch reads MSFHVE. The helical transmembrane segment at 7 to 27 threads the bilayer; it reads GLVAIILFYLLIFLVGIWAAW. Over 28 to 48 the chain is Cytoplasmic; the sequence is KTKNSGNPEERSEAIIVGGRD. The helical transmembrane segment at 49–69 threads the bilayer; sequence IGLLVGGFTMTATWVGGGYIN. The Extracellular portion of the chain corresponds to 70-81; it reads GTAEAVYGPGCG. The helical transmembrane segment at 82-102 threads the bilayer; that stretch reads LAWAQAPIGYSLSLILGGLFF. Residues 103-125 are Cytoplasmic-facing; it reads AKPMRSKGYVTMLDPFQQIYGKR. Residues 126-146 traverse the membrane as a helical segment; it reads MGGLLFIPALMGEMFWAAAIF. The Extracellular portion of the chain corresponds to 147–164; sequence SALGATISVIIDVDVNIS. A helical membrane pass occupies residues 165–185; it reads VIVSALIAILYTLVGGLYSVA. Topologically, residues 186–191 are cytoplasmic; that stretch reads YTDVVQ. Residues 192-212 traverse the membrane as a helical segment; it reads LFCIFIGLWISVPFALSHPAV. Topologically, residues 213–237 are extracellular; it reads TDIGFTAVHAKYQSPWLGTIESVEV. Residues 238 to 258 traverse the membrane as a helical segment; the sequence is YTWLDNFLLLMLGGIPWQAYF. Over 259-274 the chain is Cytoplasmic; it reads QRVLSSSSATYAQVLS. A helical transmembrane segment spans residues 275–295; it reads FLAAFGCLVMALPAICIGAIG. Residues 296-317 are Extracellular-facing; the sequence is ASTDWNQTAYGYPDPKTKEEAD. The N-linked (GlcNAc...) asparagine glycan is linked to Asn-301. A helical transmembrane segment spans residues 318–338; that stretch reads MILPIVLQYLCPVYISFFGLG. The Cytoplasmic portion of the chain corresponds to 339 to 376; it reads AVSAAVMSSADSSILSASSMFARNIYQLSFRQNASDKE. A helical membrane pass occupies residues 377-397; it reads IVWVMRITVLVFGASATAMAL. The Extracellular segment spans residues 398–406; it reads LTKTVYGLW. A helical transmembrane segment spans residues 407–427; sequence YLSSDLVYIIIFPQLLCVLFI. Over 428-435 the chain is Cytoplasmic; that stretch reads KGTNTYGA. Residues 436-456 form a helical membrane-spanning segment; it reads VAGYIFGLFLRITGGEPYLYL. Over 457–481 the chain is Extracellular; it reads QPLIFYPGYYSDKNGIYNQRFPFKT. Residues 482 to 502 form a helical membrane-spanning segment; it reads LSMVTSFFTNICVSYLAKYLF. The mediates interaction with SEC14L1 stretch occupies residues 502–580; the sequence is FESGTLPPKL…EGSGTEDNLQ (79 aa). The Cytoplasmic segment spans residues 503–580; the sequence is ESGTLPPKLD…EGSGTEDNLQ (78 aa). Positions 527-532 match the Dileucine-like motif motif; that stretch reads DKTILV.

It belongs to the sodium:solute symporter (SSF) (TC 2.A.21) family. In terms of assembly, homooligomerizes at cell surface. Interacts with SEC14L1; may regulate SLC5A7. In terms of processing, phosphorylated by PKC and dephosphorylated by PP1/PP2A. As to expression, found in spinal cord, brain-stem, mid-brain and striatum. Specific for cholinergic neurons.

It is found in the presynaptic cell membrane. The protein resides in the cell projection. It localises to the axon. The protein localises to the early endosome membrane. Its subcellular location is the cytoplasmic vesicle. It is found in the secretory vesicle. The protein resides in the synaptic vesicle membrane. It catalyses the reaction choline(out) + n Na(+)(out) = choline(in) + n Na(+)(in). Choline uptake activity is regulated by SLC5A7/CHT1 internalization (inactive form) from the cell surface and recycling of internalized SLC5A7/CHT1 into the cell surface (active form). Activated by extracellular chloride ion. Specifically inhibited by nanomolar concentrations of hemicholinium 3. High-affinity Na(+)-coupled choline transmembrane symporter. Functions as an electrogenic, voltage-dependent transporter with variable charge/choline stoichiometry. Choline uptake and choline-induced current is also Cl(-)-dependent where Cl(-) is likely a regulatory ion rather than cotransported ion. Plays a critical role in acetylcholine (ACh) synthesis by taking up the substrate choline from the synaptic cleft into the presynaptic nerve terminals after neurotransmitter release. SLC5A7/CHT1-mediated choline high-affinity transport in cholinergic neurons is the rate-limiting step for production of ACh, thereby facilitating communication by subsequent action potentials. Localized predominantly in presynaptic terminal intracellular organelles, and translocated to the plasma membrane in active form in response to neuronal activity. This chain is High affinity choline transporter 1, found in Mus musculus (Mouse).